Reading from the N-terminus, the 180-residue chain is Kappa-casein (180 aa).

Residues 1–21 (MMKHFLLVVNILAVTLPFLAA) form the signal peptide. O-linked (GalNAc...) threonine glycosylation is found at T132, T142, T147, and T153. S160 bears the Phosphoserine; alternate mark. O-linked (GalNAc...) serine; alternate glycosylation occurs at S160.

It belongs to the kappa-casein family. As to expression, mammary gland specific. Secreted in milk.

The protein localises to the secreted. Functionally, kappa-casein stabilizes micelle formation, preventing casein precipitation in milk. This is Kappa-casein (CSN3) from Oryctolagus cuniculus (Rabbit).